Here is a 481-residue protein sequence, read N- to C-terminus: MAHRILRDHEADGWERSDFPIICESCLGDNPYVRMTKANYDKECKICTRPFTVFRWRPGRDARYKKTEICQTCCKLKNVCQVCLLDLEYGLPVQVRDTALNISTHDSIPKSDVNREYFAEEHDRKARAGLDYESSFGKMRPNDTILKLQRTTPYYKRNRAHVCSFFIRGECTRGAECPYRHEMPETGELSQQNIKDRYYGVNDPVAMKLLGKAGEMGTLESPDDESIKTLYVGGLNSRILEQDIRDQFYAHGEIESIRILADKACAFVTYTSREGAEKAAQELSNRLVINGQRLKLTWGRPKPDQDGANQQGGVAHSGLLPRAVISQQHNQPPPMQQYYMHPPPANQDKPYYPSMDPQRMGAVISTQEAGGSSTENNGASSSSYMMPPHQSYPPPPYGYMPSPYQQQYPPNHHHQPSPMQHYAPPPAAYPYPQQPGPGSRPAPSPTAVSAISPDSAPAGSGAPSGSSQQAPDVSTATGSSQ.

A C3H1-type zinc finger spans residues 157–184 (RNRAHVCSFFIRGECTRGAECPYRHEMP). Positions 228-301 (KTLYVGGLNS…QRLKLTWGRP (74 aa)) constitute an RRM domain. The segment at 329-481 (HNQPPPMQQY…DVSTATGSSQ (153 aa)) is disordered. The span at 331–345 (QPPPMQQYYMHPPPA) shows a compositional bias: pro residues. Composition is skewed to low complexity over residues 369–389 (AGGS…MPPH) and 399–410 (YMPSPYQQQYPP). A compositionally biased stretch (pro residues) spans 423–444 (APPPAAYPYPQQPGPGSRPAPS). A compositionally biased stretch (low complexity) spans 449–471 (SAISPDSAPAGSGAPSGSSQQAP). The segment covering 472–481 (DVSTATGSSQ) has biased composition (polar residues).

This chain is Zinc finger CCCH domain-containing protein 4, found in Arabidopsis thaliana (Mouse-ear cress).